The chain runs to 1207 residues: MVDVNRFKSMQITLASPSKVRSWSYGEVKKPETINYRTLKPEREGLFDEVIFGPTKDWECACGKYKRIRYKGIVCDRCGVEVTRAKVRRERMGHIELKAPVSHIWYFKGIPSRMGLTLDMSPRALEEVIYFAAYVVIDPKDTPLEPKSLLTEREYREKLQEYGHGSFVAKMGAEAIQDLLKRVDLAAEIAELKEELKSASGQKRIKAVRRLDVLDAFNKSGNKPEWMVLNILPVIPPDLRPMVQLDGGRFAASDLNDLYRRVINRNNRLARLLELNAPGIIVQNEKRMLQEAVDALIDNGRRGRPITGPGSRPLKSLSHMLKGKQGRFRQNLLGKRVDFSGRSVIAVGPTLKMYQCGVPREMAIELFKPFVMREIVAKEYAGNVKAAKRMVERGDERIWDILEEVIKEHPVLLNRAPTLHRLGIQAFEPVLIDGKALRLHPLVCEAYNADFDGDQMAIHVPLSEEAQAEARLLMLAAEHILNPKDGKPVVTPSQDMVLGNYYLTMEDAGREGEGMIFKDKDEAVMAYRNGYAHLHSRVGIAVDSMPNKPWKDSQRHKIMVTTVGKILFNDIMPEDLPYLQEPNNANLTEGTPDKYFLEPGQNIQEVIDGLDINVPFKKKNLGNIIAETFKRFRTTETSAFLDRLKDLGYYHSTLAGLTVGIADIPVIDNKAEIIDAAHHRVEEINKAFRRGLMTDDDRYVAVTTTWREAKEALEKRLIETQDPKNPIVMMMDSGARGNISNFSQLAGMRGLMAAPNGRIMELPILSNFREGLSVLEMFFSTHGARKGMTDTALKTADSGYLTRRLVDVAQDVIIREDDCGTDRGLLIRAITDGKEVTETLEVRLQGRYTRKSVKHPETGEVLIGADQLITEDMARKIVDAGVEEVTIRSVFTCATRHGVCRHCYGINLATGDAVEVGEAVGTIAAQSIGEPGTQLTMRTFHTGGVASNTDITQGLPRIQEIFEARNPKGEAVITEVKGNVVEIEEDASTRTKKVYVQGKTGMGEYVVPFTARMKVEVGDEVNRGAALTEGSIQPKRLLEVRDTLSVETYLLAEVQKVYRSQGVEIGDKHVEVMVRQMLRKVRVMDPGDTDLLPGTLMDISDFTDANKDIVISGGIPATSRPVLMGITKASLETNSFLSAASFQETTRVLTDAAIRGKKDHLLGLKENVIIGKIIPAGTGMARYRNIEPQAMNEIEVIDHTEVSAEAE.

Residues Cys60, Cys62, Cys75, and Cys78 each contribute to the Zn(2+) site. Mg(2+) contacts are provided by Asp450, Asp452, and Asp454. Zn(2+) contacts are provided by Cys819, Cys893, Cys900, and Cys903.

It belongs to the RNA polymerase beta' chain family. In terms of assembly, the RNAP catalytic core consists of 2 alpha, 1 beta, 1 beta' and 1 omega subunit. When a sigma factor is associated with the core the holoenzyme is formed, which can initiate transcription. Mg(2+) serves as cofactor. Requires Zn(2+) as cofactor.

The catalysed reaction is RNA(n) + a ribonucleoside 5'-triphosphate = RNA(n+1) + diphosphate. Functionally, DNA-dependent RNA polymerase catalyzes the transcription of DNA into RNA using the four ribonucleoside triphosphates as substrates. The sequence is that of DNA-directed RNA polymerase subunit beta' from Streptococcus pyogenes serotype M3 (strain SSI-1).